The chain runs to 460 residues: Cyclic 2,3-diphosphoglycerate synthetase (460 aa).

Homodimer.

The protein resides in the cytoplasm. It catalyses the reaction (2R)-2,3-bisphosphoglycerate + ATP + H(+) = cyclic (2R)-2,3-bisphosphoglycerate + ADP + phosphate. Its function is as follows. Catalyzes the formation of cyclic 2,3-diphosphoglycerate (cDPG) by formation of an intramolecular phosphoanhydride bond at the expense of ATP. It is also able to catalyze the hydrolysis of cDPG but with significant slower rates (8-10 times). May be involved in thermoadaptation. The protein is Cyclic 2,3-diphosphoglycerate synthetase (cpgS) of Methanothermus fervidus (strain ATCC 43054 / DSM 2088 / JCM 10308 / V24 S).